A 463-amino-acid polypeptide reads, in one-letter code: Casein kinase 1 (463 aa).

Residues 9–278 (FKLGRKIGSG…LKRLFRDLFI (270 aa)) enclose the Protein kinase domain. Residues 15 to 23 (IGSGSFGEL) and lysine 38 each bind ATP. The active-site Proton acceptor is the aspartate 128. Polar residues predominate over residues 296-306 (ESNRLRSSGRT). The tract at residues 296-448 (ESNRLRSSGR…TARNVHDDPT (153 aa)) is disordered. Residues 315–328 (ERTERAAARQDVPD) are compositionally biased toward basic and acidic residues. Polar residues-rich tracts occupy residues 376 to 396 (TSSSRNGSTSRKALLSSSRPS) and 404 to 440 (NRSNLIPTSSGSSRPSTMQRLHQSTGLETRSSLTKTA).

The protein belongs to the protein kinase superfamily. CK1 Ser/Thr protein kinase family. Casein kinase I subfamily. Monomer. In terms of processing, autophosphorylated. As to expression, expressed in leaves, stems, panicles and seeds. Expressed in root tissues and lamina joints.

It localises to the cytoplasm. It is found in the nucleus. It catalyses the reaction L-seryl-[protein] + ATP = O-phospho-L-seryl-[protein] + ADP + H(+). The enzyme catalyses L-threonyl-[protein] + ATP = O-phospho-L-threonyl-[protein] + ADP + H(+). Its activity is regulated as follows. Inhibited by N-(2-aminoethyl)-5-chloroisoquinoline-8-sulfonamide (CKI-7). Functionally, casein kinases are operationally defined by their preferential utilization of acidic proteins such as caseins as substrates. Can phosphorylate casein in vitro. Required for normal root development through modulation of cell elongation. Plants silencing CKI1 show abnormal root development, with reduced number of lateral and adventitious roots, and shortened primary roots as a result of reduced cell elongation. May be involved in abscisic acid (ABA) and brassinosteroid (BR) signaling pathways. Plays an important role in the adaptive growth and fitness under low temperature (LT) conditions. May confer tolerance to LT through an auxin-dependent process. In Oryza sativa subsp. japonica (Rice), this protein is Casein kinase 1 (CKI1).